A 156-amino-acid polypeptide reads, in one-letter code: Ribonuclease 1B pancreatic (156 aa).

The signal sequence occupies residues 1 to 28; the sequence is MALDKSVIPLPLLVVVLLVLGWAQPSLG. Substrate is bound by residues K35 and R38. H40 (proton acceptor) is an active-site residue. Disulfide bonds link C54-C112, C68-C123, C86-C138, and C93-C100. The N-linked (GlcNAc...) asparagine glycan is linked to N62. Residues 69 to 73, K94, and R113 each bind substrate; that span reads KSVNT. N-linked (GlcNAc...) asparagine glycosylation is present at N116. H147 acts as the Proton donor in catalysis.

This sequence belongs to the pancreatic ribonuclease family. As to quaternary structure, monomer.

It is found in the secreted. The catalysed reaction is an [RNA] containing cytidine + H2O = an [RNA]-3'-cytidine-3'-phosphate + a 5'-hydroxy-ribonucleotide-3'-[RNA].. The enzyme catalyses an [RNA] containing uridine + H2O = an [RNA]-3'-uridine-3'-phosphate + a 5'-hydroxy-ribonucleotide-3'-[RNA].. Its function is as follows. Endonuclease that catalyzes the cleavage of RNA on the 3' side of pyrimidine nucleotides. Compared to RNASE1 it has lost activity towards dsRNA. The polypeptide is Ribonuclease 1B pancreatic (RNASE1B) (Pygathrix nemaeus (Red-shanked douc langur)).